Here is a 458-residue protein sequence, read N- to C-terminus: ATP synthase subunit beta (458 aa).

148 to 155 (GGAGVGKT) contributes to the ATP binding site.

The protein belongs to the ATPase alpha/beta chains family. F-type ATPases have 2 components, CF(1) - the catalytic core - and CF(0) - the membrane proton channel. CF(1) has five subunits: alpha(3), beta(3), gamma(1), delta(1), epsilon(1). CF(0) has three main subunits: a(1), b(2) and c(9-12). The alpha and beta chains form an alternating ring which encloses part of the gamma chain. CF(1) is attached to CF(0) by a central stalk formed by the gamma and epsilon chains, while a peripheral stalk is formed by the delta and b chains.

The protein resides in the cell inner membrane. The catalysed reaction is ATP + H2O + 4 H(+)(in) = ADP + phosphate + 5 H(+)(out). Produces ATP from ADP in the presence of a proton gradient across the membrane. The catalytic sites are hosted primarily by the beta subunits. This Shewanella loihica (strain ATCC BAA-1088 / PV-4) protein is ATP synthase subunit beta.